Here is a 728-residue protein sequence, read N- to C-terminus: 1,4-alpha-glucan branching enzyme GlgB (728 aa).

Asp-405 acts as the Nucleophile in catalysis. The active-site Proton donor is the Glu-458.

This sequence belongs to the glycosyl hydrolase 13 family. GlgB subfamily. In terms of assembly, monomer.

The catalysed reaction is Transfers a segment of a (1-&gt;4)-alpha-D-glucan chain to a primary hydroxy group in a similar glucan chain.. Its pathway is glycan biosynthesis; glycogen biosynthesis. Catalyzes the formation of the alpha-1,6-glucosidic linkages in glycogen by scission of a 1,4-alpha-linked oligosaccharide from growing alpha-1,4-glucan chains and the subsequent attachment of the oligosaccharide to the alpha-1,6 position. This Salmonella paratyphi A (strain ATCC 9150 / SARB42) protein is 1,4-alpha-glucan branching enzyme GlgB.